The chain runs to 238 residues: Ribitol-5-phosphate cytidylyltransferase (238 aa).

CTP-binding positions include 7-10 (LAGG) and 81-87 (GDDRNHT).

This sequence belongs to the IspD/TarI cytidylyltransferase family. TarI subfamily.

The enzyme catalyses D-ribitol 5-phosphate + CTP + H(+) = CDP-L-ribitol + diphosphate. It participates in cell wall biogenesis; poly(ribitol phosphate) teichoic acid biosynthesis. Catalyzes the transfer of the cytidylyl group of CTP to D-ribitol 5-phosphate. The chain is Ribitol-5-phosphate cytidylyltransferase from Staphylococcus epidermidis (strain ATCC 35984 / DSM 28319 / BCRC 17069 / CCUG 31568 / BM 3577 / RP62A).